A 188-amino-acid polypeptide reads, in one-letter code: Transcription antitermination protein NusB (188 aa).

The interval 154–188 (RAANPGAVSGSDAPVAPWDDSEELPAEDEAEDSRP) is disordered. A compositionally biased stretch (acidic residues) spans 172–188 (DDSEELPAEDEAEDSRP).

It belongs to the NusB family.

Functionally, involved in transcription antitermination. Required for transcription of ribosomal RNA (rRNA) genes. Binds specifically to the boxA antiterminator sequence of the ribosomal RNA (rrn) operons. This Corynebacterium efficiens (strain DSM 44549 / YS-314 / AJ 12310 / JCM 11189 / NBRC 100395) protein is Transcription antitermination protein NusB.